A 1115-amino-acid chain; its full sequence is Ubiquitin C-terminal hydrolase 13 (1115 aa).

The interval 1–51 is disordered; that stretch reads MTMMTPPPLDQQEDEEMLVPNPDLVEGPQPMEVAQTDPAATAVENPPPEDP. The MATH domain maps to 53–178; sequence SLKFTWTIPM…NDTVLIEAEV (126 aa). Residues 198 to 522 enclose the USP domain; it reads VGLKNQGATC…NAYMLVYIRE (325 aa). Cys207 serves as the catalytic Nucleophile. The Proton acceptor role is filled by His454.

The protein belongs to the peptidase C19 family. As to quaternary structure, interacts with SIC/RON3. Interacts with RGI1 and RGI2.

The enzyme catalyses Thiol-dependent hydrolysis of ester, thioester, amide, peptide and isopeptide bonds formed by the C-terminal Gly of ubiquitin (a 76-residue protein attached to proteins as an intracellular targeting signal).. In terms of biological role, recognizes and hydrolyzes the peptide bond at the C-terminal Gly of ubiquitin. Involved in the processing of poly-ubiquitin precursors as well as that of ubiquitinated proteins. Positive regulator of root meristem development that, together with UBP12, prevents the ubiquitination and turnover of RGFR1 induced by the RGF1 hormone peptide, thus influencing PLT1 and PLT2 expression. The chain is Ubiquitin C-terminal hydrolase 13 from Arabidopsis thaliana (Mouse-ear cress).